A 217-amino-acid polypeptide reads, in one-letter code: Growth hormone variant (217 aa).

An N-terminal signal peptide occupies residues 1–26 (MAAGSRTSLLLAFGLLCLPWLQEGSA). 2 cysteine pairs are disulfide-bonded: Cys79–Cys191 and Cys208–Cys215. Position 132 is a phosphoserine (Ser132). N-linked (GlcNAc...) asparagine glycosylation is present at Asn166. Ser176 is subject to Phosphoserine.

This sequence belongs to the somatotropin/prolactin family. Expressed in the placenta.

The protein localises to the secreted. Functionally, plays an important role in growth control. Its major role in stimulating body growth is to stimulate the liver and other tissues to secrete IGF1. It stimulates both the differentiation and proliferation of myoblasts. It also stimulates amino acid uptake and protein synthesis in muscle and other tissues. The sequence is that of Growth hormone variant (GH2) from Pan troglodytes (Chimpanzee).